We begin with the raw amino-acid sequence, 66 residues long: MPKMKTHRGSAKRFKKTASGKLKRGHAYTSHLFANKTKKQKRHLRKAALVSPGDFKRIRQMLDNLK.

Residues 1–26 (MPKMKTHRGSAKRFKKTASGKLKRGH) show a composition bias toward basic residues. The disordered stretch occupies residues 1-28 (MPKMKTHRGSAKRFKKTASGKLKRGHAY).

It belongs to the bacterial ribosomal protein bL35 family.

The protein is Large ribosomal subunit protein bL35 of Geobacillus thermodenitrificans (strain NG80-2).